Reading from the N-terminus, the 65-residue chain is Large ribosomal subunit protein bL33m (65 aa).

Residues 1–8 (MFLSAVFF) constitute a mitochondrion transit peptide.

Belongs to the bacterial ribosomal protein bL33 family. In terms of assembly, component of the mitochondrial large ribosomal subunit (mt-LSU). Mature mammalian 55S mitochondrial ribosomes consist of a small (28S) and a large (39S) subunit. The 28S small subunit contains a 12S ribosomal RNA (12S mt-rRNA) and 30 different proteins. The 39S large subunit contains a 16S rRNA (16S mt-rRNA), a copy of mitochondrial valine transfer RNA (mt-tRNA(Val)), which plays an integral structural role, and 52 different proteins.

It localises to the mitochondrion. The polypeptide is Large ribosomal subunit protein bL33m (MRPL33) (Homo sapiens (Human)).